The following is a 139-amino-acid chain: ATP synthase epsilon chain (139 aa).

Belongs to the ATPase epsilon chain family. In terms of assembly, F-type ATPases have 2 components, CF(1) - the catalytic core - and CF(0) - the membrane proton channel. CF(1) has five subunits: alpha(3), beta(3), gamma(1), delta(1), epsilon(1). CF(0) has three main subunits: a, b and c.

It is found in the cell inner membrane. Its function is as follows. Produces ATP from ADP in the presence of a proton gradient across the membrane. The chain is ATP synthase epsilon chain from Pseudomonas putida (strain W619).